The primary structure comprises 182 residues: Hypoxanthine/guanine phosphoribosyltransferase (182 aa).

The protein belongs to the purine/pyrimidine phosphoribosyltransferase family. Archaeal HPRT subfamily. In terms of assembly, homodimer.

Its subcellular location is the cytoplasm. The catalysed reaction is IMP + diphosphate = hypoxanthine + 5-phospho-alpha-D-ribose 1-diphosphate. The enzyme catalyses GMP + diphosphate = guanine + 5-phospho-alpha-D-ribose 1-diphosphate. The protein operates within purine metabolism; IMP biosynthesis via salvage pathway; IMP from hypoxanthine: step 1/1. Its function is as follows. Catalyzes a salvage reaction resulting in the formation of IMP that is energically less costly than de novo synthesis. This is Hypoxanthine/guanine phosphoribosyltransferase from Methanosphaerula palustris (strain ATCC BAA-1556 / DSM 19958 / E1-9c).